Here is a 289-residue protein sequence, read N- to C-terminus: NAD(P)H-hydrate epimerase (289 aa).

In terms of domain architecture, YjeF N-terminal spans 71-277; the sequence is AQTIDNELMS…SIVEKYNLKI (207 aa). (6S)-NADPHX is bound at residue 122 to 126; the sequence is NNGGD. K(+)-binding residues include asparagine 123 and aspartate 185. (6S)-NADPHX-binding positions include 189-195 and aspartate 218; that span reads GFSFRGE. Serine 221 lines the K(+) pocket.

The protein belongs to the NnrE/AIBP family. K(+) serves as cofactor.

It catalyses the reaction (6R)-NADHX = (6S)-NADHX. The enzyme catalyses (6R)-NADPHX = (6S)-NADPHX. In terms of biological role, catalyzes the epimerization of the S- and R-forms of NAD(P)HX, a damaged form of NAD(P)H that is a result of enzymatic or heat-dependent hydration. This is a prerequisite for the S-specific NAD(P)H-hydrate dehydratase to allow the repair of both epimers of NAD(P)HX. This Plasmodium knowlesi (strain H) protein is NAD(P)H-hydrate epimerase.